The primary structure comprises 290 residues: Arylamine N-acetyltransferase, pineal gland isozyme NAT-10 (290 aa).

The Acyl-thioester intermediate role is filled by Cys-68. Residues His-107 and Asp-122 contribute to the active site.

Belongs to the arylamine N-acetyltransferase family.

The enzyme catalyses an arylamine + acetyl-CoA = an N-acetylarylamine + CoA. The polypeptide is Arylamine N-acetyltransferase, pineal gland isozyme NAT-10 (Gallus gallus (Chicken)).